The chain runs to 270 residues: UPF0354 protein BCAH820_4810 (270 aa).

It belongs to the UPF0354 family.

The polypeptide is UPF0354 protein BCAH820_4810 (Bacillus cereus (strain AH820)).